The chain runs to 475 residues: Probable proline--tRNA ligase, mitochondrial (475 aa).

Residues 1-29 (MEGLLTRCRTLSALAACSLRHCRYIIHKC) constitute a mitochondrion transit peptide.

It belongs to the class-II aminoacyl-tRNA synthetase family.

It localises to the mitochondrion matrix. The catalysed reaction is tRNA(Pro) + L-proline + ATP = L-prolyl-tRNA(Pro) + AMP + diphosphate. Its function is as follows. Mitochondrial aminoacyl-tRNA synthetase that catalyzes the specific attachment of the proline amino acid (aa) to the homologous transfer RNA (tRNA), further participating in protein synthesis. The reaction occurs in a two steps: proline is first activated by ATP to form Pro-AMP and then transferred to the acceptor end of tRNA(Pro). The chain is Probable proline--tRNA ligase, mitochondrial (Pars2) from Mus musculus (Mouse).